A 153-amino-acid chain; its full sequence is Ergochrome gene cluster protein CPUR_05425 (153 aa).

It participates in pigment biosynthesis. In terms of biological role, part of the ergochrome gene cluster responsible for the typical purple-black color of the ergot sclerotia. The ergochrome gene cluster produces several ergot pigments including the yellow ergochrome secalonic acid and its derivatives, as well as the red anthraquinones endocrocin and clavorubin. The pathway begins with the synthesis of atrochrysone thioester by the polyketide synthase (PKS) CPUR_05437. The atrochrysone carboxyl ACP thioesterase CPUR_05436 then breaks the thioester bond and releases the atrochrysone carboxylic acid from CPUR_05437. The atrochrysone carboxylic acid is then converted to atrochrysone which is further transformed into emodin anthrone. The next step is performed by the anthrone oxygenase CPUR_05434 that catalyzes the oxidation of emodinanthrone to emodin. Emodin is further modified to yield monodictyphenone via several steps involving CPUR_05427, CPUR_05428, CPUR_05429 and CPUR_05430. The short chain dehydrogenase/reductase CPUR_05418 then catalyzes the C-5 ketoreduction to give the xanthone skeleton of the monomeric units. Ergochromes formation requires further dimerization steps of different xanthone units, probably catalyzed by the cytochrome P450 monooxygenase CPUR_05419. CPUR_05425, CPUR_05426 and CPUR_05431 are unique to Claviceps, thus it is likely that they are involved in further modification of xanthone units or in their dimerization. The yellow ergochromes and the red anthraquinone pigments endocrocin and clavorubin are products from the same PKS derived precursors and the latter are likely shunt products in the pathway of xanthone biosynthesis. It is proposed that atrochrysone carboxylic acid released from the PKS CPUR_05437 can also be converted to endocrocin anthrone which is further oxidized into endocrocin by CPUR_05435. Endocrocin could be then modified to clavorubin, possibly by CPUR_05423 and CPUR_05431. Clavorubin is the principal anthraquinone metabolite produced by the cluster with a much higher yield compared to endocrocin. The protein is Ergochrome gene cluster protein CPUR_05425 of Claviceps purpurea (strain 20.1) (Ergot fungus).